The primary structure comprises 558 residues: Formate--tetrahydrofolate ligase (558 aa).

66–73 (TPAGEGKT) lines the ATP pocket.

This sequence belongs to the formate--tetrahydrofolate ligase family.

The catalysed reaction is (6S)-5,6,7,8-tetrahydrofolate + formate + ATP = (6R)-10-formyltetrahydrofolate + ADP + phosphate. Its pathway is one-carbon metabolism; tetrahydrofolate interconversion. This chain is Formate--tetrahydrofolate ligase, found in Neisseria gonorrhoeae (strain NCCP11945).